We begin with the raw amino-acid sequence, 512 residues long: Glycerol kinase 1 (512 aa).

Threonine 18 provides a ligand contact to ADP. Residues threonine 18, threonine 19, and serine 20 each contribute to the ATP site. Threonine 18 lines the sn-glycerol 3-phosphate pocket. Arginine 22 serves as a coordination point for ADP. Sn-glycerol 3-phosphate-binding residues include arginine 88, glutamate 89, tyrosine 140, and aspartate 255. Residues arginine 88, glutamate 89, tyrosine 140, aspartate 255, and glutamine 256 each coordinate glycerol. Threonine 277 and glycine 321 together coordinate ADP. Residues threonine 277, glycine 321, glutamine 325, and glycine 422 each contribute to the ATP site. ADP-binding residues include glycine 422 and asparagine 426.

This sequence belongs to the FGGY kinase family.

The enzyme catalyses glycerol + ATP = sn-glycerol 3-phosphate + ADP + H(+). Its pathway is polyol metabolism; glycerol degradation via glycerol kinase pathway; sn-glycerol 3-phosphate from glycerol: step 1/1. With respect to regulation, inhibited by fructose 1,6-bisphosphate (FBP). Its function is as follows. Key enzyme in the regulation of glycerol uptake and metabolism. Catalyzes the phosphorylation of glycerol to yield sn-glycerol 3-phosphate. This chain is Glycerol kinase 1, found in Streptomyces avermitilis (strain ATCC 31267 / DSM 46492 / JCM 5070 / NBRC 14893 / NCIMB 12804 / NRRL 8165 / MA-4680).